An 82-amino-acid polypeptide reads, in one-letter code: ATP synthase subunit c (82 aa).

The next 2 helical transmembrane spans lie at 18–38 and 61–81; these read LGEALGAGLAVIGAGLGIGKI and IIAAALVEGVSLFAVVVCGFL.

The protein belongs to the ATPase C chain family. As to quaternary structure, F-type ATPases have 2 components, F(1) - the catalytic core - and F(0) - the membrane proton channel. F(1) has five subunits: alpha(3), beta(3), gamma(1), delta(1), epsilon(1). F(0) has three main subunits: a(1), b(2) and c(10-14). The alpha and beta chains form an alternating ring which encloses part of the gamma chain. F(1) is attached to F(0) by a central stalk formed by the gamma and epsilon chains, while a peripheral stalk is formed by the delta and b chains.

Its subcellular location is the cell inner membrane. Functionally, f(1)F(0) ATP synthase produces ATP from ADP in the presence of a proton or sodium gradient. F-type ATPases consist of two structural domains, F(1) containing the extramembraneous catalytic core and F(0) containing the membrane proton channel, linked together by a central stalk and a peripheral stalk. During catalysis, ATP synthesis in the catalytic domain of F(1) is coupled via a rotary mechanism of the central stalk subunits to proton translocation. Key component of the F(0) channel; it plays a direct role in translocation across the membrane. A homomeric c-ring of between 10-14 subunits forms the central stalk rotor element with the F(1) delta and epsilon subunits. The chain is ATP synthase subunit c from Azobacteroides pseudotrichonymphae genomovar. CFP2.